The chain runs to 352 residues: Ion-translocating oxidoreductase complex subunit D (352 aa).

Helical transmembrane passes span 20–40 (IMLL…WFFG), 42–62 (GTLV…ALVL), 78–109 (ALLT…VIIA), 123–143 (PAMI…TSWL), and 148–168 (IAVN…GHTA). Thr-187 is modified (FMN phosphoryl threonine). 5 helical membrane-spanning segments follow: residues 214 to 234 (ILAG…GVWL), 242 to 262 (WHIP…GWLF), 267 to 287 (LAAP…FFIL), 301 to 321 (LIFG…GGYP), and 322 to 342 (DGVA…DYYT).

The protein belongs to the NqrB/RnfD family. As to quaternary structure, the complex is composed of six subunits: RsxA, RsxB, RsxC, RsxD, RsxE and RsxG. FMN is required as a cofactor.

The protein resides in the cell inner membrane. Functionally, part of a membrane-bound complex that couples electron transfer with translocation of ions across the membrane. Required to maintain the reduced state of SoxR. This is Ion-translocating oxidoreductase complex subunit D from Escherichia coli O6:K15:H31 (strain 536 / UPEC).